Reading from the N-terminus, the 508-residue chain is Vacuolar serine-type carboxypeptidase ATG42 (508 aa).

The signal sequence occupies residues 1–24; the sequence is MKYLNLVFVLQLLISIKYASFGRA. 5 disulfide bridges follow: Cys132–Cys375, Cys267–Cys281, Cys291–Cys314, Cys298–Cys307, and Cys336–Cys345. N-linked (GlcNAc...) asparagine glycosylation occurs at Asn163. Ser219 is an active-site residue. Residue Asn242 is glycosylated (N-linked (GlcNAc...) asparagine). Asn339 and Asn371 each carry an N-linked (GlcNAc...) asparagine glycan. Asp415 is a catalytic residue. Residue Cys418 participates in substrate binding. His474 is a catalytic residue. Met475 provides a ligand contact to substrate.

It belongs to the peptidase S10 family.

The protein localises to the vacuole lumen. It catalyses the reaction Release of a C-terminal amino acid with broad specificity.. In terms of biological role, vacuolar serine-type carboxypeptidase involved in vacuolar zymogen activation, breakdown of the autophagic body, and autophagosome-dependent protein synthesis. Plays a key role in phytochelatin (PC) synthesis from glutathione (GSH) by cleaving the Gly from GSH and form the PC-peptides of the structure (gamma-Glu-Cys)2-Gly. Also involved in resistance to xenobiotics via the degradation of glutathione-S-conjugates. This Saccharomyces cerevisiae (strain ATCC 204508 / S288c) (Baker's yeast) protein is Vacuolar serine-type carboxypeptidase ATG42.